Here is a 377-residue protein sequence, read N- to C-terminus: tRNA-specific 2-thiouridylase MnmA (377 aa).

Residues 16–23 (GMSGGVDS) and Met42 each bind ATP. The tract at residues 102–104 (NPD) is interaction with target base in tRNA. Catalysis depends on Cys107, which acts as the Nucleophile. Cys107 and Cys204 are disulfide-bonded. Residue Gly131 participates in ATP binding. The segment at 154-156 (KDQ) is interaction with tRNA. The Cysteine persulfide intermediate role is filled by Cys204. The interaction with tRNA stretch occupies residues 315–316 (RY).

Belongs to the MnmA/TRMU family.

It localises to the cytoplasm. The catalysed reaction is S-sulfanyl-L-cysteinyl-[protein] + uridine(34) in tRNA + AH2 + ATP = 2-thiouridine(34) in tRNA + L-cysteinyl-[protein] + A + AMP + diphosphate + H(+). Catalyzes the 2-thiolation of uridine at the wobble position (U34) of tRNA, leading to the formation of s(2)U34. The chain is tRNA-specific 2-thiouridylase MnmA from Lacticaseibacillus paracasei (strain ATCC 334 / BCRC 17002 / CCUG 31169 / CIP 107868 / KCTC 3260 / NRRL B-441) (Lactobacillus paracasei).